The primary structure comprises 1118 residues: Phytochrome 1 (1118 aa).

The segment covering 1-10 (MSSTRHSYSS) has biased composition (low complexity). The segment at 1 to 23 (MSSTRHSYSSGGSGKSKHGRRIA) is disordered. Positions 212 to 391 (DIGLLCDSVV…VFSLQLNMEV (180 aa)) constitute a GAF domain. C317 is a binding site for phytochromobilin. PAS domains are found at residues 606–677 (VASE…LEGE) and 740–811 (DYKA…TKLM). A Histidine kinase domain is found at 887–1110 (YVKEELKKPL…LVTIQFPLAH (224 aa)).

Belongs to the phytochrome family. As to quaternary structure, homodimer. In terms of processing, contains one covalently linked phytochromobilin chromophore.

Its function is as follows. Regulatory photoreceptor which exists in two forms that are reversibly interconvertible by light: the Pr form that absorbs maximally in the red region of the spectrum and the Pfr form that absorbs maximally in the far-red region. Photoconversion of Pr to Pfr induces an array of morphogenic responses, whereas reconversion of Pfr to Pr cancels the induction of those responses. Pfr controls the expression of a number of nuclear genes including those encoding the small subunit of ribulose-bisphosphate carboxylase, chlorophyll A/B binding protein, protochlorophyllide reductase, rRNA, etc. It also controls the expression of its own gene(s) in a negative feedback fashion. The chain is Phytochrome 1 (PHY1) from Adiantum capillus-veneris (Maidenhair fern).